A 254-amino-acid chain; its full sequence is Alcohol dehydrogenase (254 aa).

Residue 10 to 33 (FVAGLGGIGLDTSRELVKRNLKNL) participates in NAD(+) binding. A substrate-binding site is contributed by S138. The active-site Proton acceptor is Y151.

The protein belongs to the short-chain dehydrogenases/reductases (SDR) family. As to quaternary structure, homodimer.

The catalysed reaction is a primary alcohol + NAD(+) = an aldehyde + NADH + H(+). It carries out the reaction a secondary alcohol + NAD(+) = a ketone + NADH + H(+). This chain is Alcohol dehydrogenase (Adh), found in Drosophila persimilis (Fruit fly).